The sequence spans 134 residues: UPF0357 protein YCL012C (134 aa).

The signal sequence occupies residues 1 to 23 (MKSLFYLKLLLWVVLLSLCLLMA). Residues S71 and S74 each carry the phosphoserine modification. K86 is covalently cross-linked (Glycyl lysine isopeptide (Lys-Gly) (interchain with G-Cter in ubiquitin)).

The protein belongs to the UPF0357 family.

This Saccharomyces cerevisiae (strain ATCC 204508 / S288c) (Baker's yeast) protein is UPF0357 protein YCL012C.